We begin with the raw amino-acid sequence, 421 residues long: 4-methylaminobutanoate oxidase (methylamine-forming) (421 aa).

FAD is bound by residues Glu31, Arg33, Arg39, and Glu379.

The protein belongs to the flavin monoamine oxidase family. Monomer. Requires FAD as cofactor.

It carries out the reaction 4-(methylamino)butanoate + O2 + H2O = succinate semialdehyde + methylamine + H2O2. The protein operates within alkaloid degradation; nicotine degradation. Functionally, catalyzes the removal of methylamine from 4-methylaminobutanoate with the formation of succinate semialdehyde. Is involved in the catabolism of 4-methylaminobutanoate produced from nicotine. Has a very weak monoamine oxidase activity with 4-aminobutanoate. Cannot use spermidine, spermine, sarcosine, dimethylglycine, glycine, choline, betaine, alpha-methylamino isobutyrate, methylamine propionitrile and methylamino propylamine as substrate. This Paenarthrobacter nicotinovorans (Arthrobacter nicotinovorans) protein is 4-methylaminobutanoate oxidase (methylamine-forming) (mao).